Here is a 276-residue protein sequence, read N- to C-terminus: Diaminopimelate epimerase (276 aa).

3 residues coordinate substrate: asparagine 11, glutamine 44, and asparagine 64. Cysteine 73 acts as the Proton donor in catalysis. Substrate contacts are provided by residues 74 to 75 (IN), asparagine 159, asparagine 192, and 210 to 211 (ER). The Proton acceptor role is filled by cysteine 219. 220–221 (GS) serves as a coordination point for substrate.

It belongs to the diaminopimelate epimerase family. In terms of assembly, homodimer.

It is found in the cytoplasm. It catalyses the reaction (2S,6S)-2,6-diaminopimelate = meso-2,6-diaminopimelate. It functions in the pathway amino-acid biosynthesis; L-lysine biosynthesis via DAP pathway; DL-2,6-diaminopimelate from LL-2,6-diaminopimelate: step 1/1. In terms of biological role, catalyzes the stereoinversion of LL-2,6-diaminopimelate (L,L-DAP) to meso-diaminopimelate (meso-DAP), a precursor of L-lysine and an essential component of the bacterial peptidoglycan. The polypeptide is Diaminopimelate epimerase (Wigglesworthia glossinidia brevipalpis).